We begin with the raw amino-acid sequence, 141 residues long: Extracellular globin-1 (141 aa).

In terms of domain architecture, Globin spans 1–141 (DCNTLKRFKV…YAVIAAGIKP (141 aa)). Cysteine 2 and cysteine 131 are joined by a disulfide. Histidine 94 is a heme b binding site.

The protein belongs to the globin family. The giant hemoglobins of worms are formed of a monomeric subunit and a disulfide-bonded trimer. This subunit is monomeric.

It localises to the secreted. In Metaphire sieboldi (Earthworm), this protein is Extracellular globin-1.